A 753-amino-acid polypeptide reads, in one-letter code: Photosystem I P700 chlorophyll a apoprotein A1 (753 aa).

A run of 8 helical transmembrane segments spans residues 72-95 (IFSA…FHGA), 158-181 (LYCT…FHYH), 197-221 (MNHH…HVSL), 293-311 (TAHH…GHMY), 350-373 (WHAQ…HHMY), 389-415 (LSLF…IFMV), 437-459 (AIIS…LYVH), and 534-552 (FMVH…LILL). Cys-576 and Cys-585 together coordinate [4Fe-4S] cluster. 2 helical membrane-spanning segments follow: residues 592–613 (HVFL…HFSW) and 667–689 (LSAY…MFLF). Residue His-678 participates in chlorophyll a' binding. Residues Met-686 and Tyr-694 each contribute to the chlorophyll a site. Residue Trp-695 participates in phylloquinone binding. Residues 727–747 (AVGVAHYLLGGIVTTWAFFLA) form a helical membrane-spanning segment.

The protein belongs to the PsaA/PsaB family. The PsaA/B heterodimer binds the P700 chlorophyll special pair and subsequent electron acceptors. PSI consists of a core antenna complex that captures photons, and an electron transfer chain that converts photonic excitation into a charge separation. The cyanobacterial PSI reaction center is composed of one copy each of PsaA,B,C,D,E,F,I,J,K,L,M and X, and forms trimeric complexes. PSI electron transfer chain: 5 chlorophyll a, 1 chlorophyll a', 2 phylloquinones and 3 4Fe-4S clusters. PSI core antenna: 90 chlorophyll a, 22 carotenoids, 3 phospholipids and 1 galactolipid. P700 is a chlorophyll a/chlorophyll a' dimer, A0 is one or more chlorophyll a, A1 is one or both phylloquinones and FX is a shared 4Fe-4S iron-sulfur center. serves as cofactor.

It is found in the cellular thylakoid membrane. It carries out the reaction reduced [plastocyanin] + hnu + oxidized [2Fe-2S]-[ferredoxin] = oxidized [plastocyanin] + reduced [2Fe-2S]-[ferredoxin]. Functionally, psaA and PsaB bind P700, the primary electron donor of photosystem I (PSI), as well as the electron acceptors A0, A1 and FX. PSI is a plastocyanin/cytochrome c6-ferredoxin oxidoreductase, converting photonic excitation into a charge separation, which transfers an electron from the donor P700 chlorophyll pair to the spectroscopically characterized acceptors A0, A1, FX, FA and FB in turn. Oxidized P700 is reduced on the lumenal side of the thylakoid membrane by plastocyanin or cytochrome c6. The protein is Photosystem I P700 chlorophyll a apoprotein A1 of Trichodesmium erythraeum (strain IMS101).